The chain runs to 249 residues: Ubiquinone/menaquinone biosynthesis C-methyltransferase UbiE (249 aa).

S-adenosyl-L-methionine-binding positions include T72, D93, and 121–122 (DA).

It belongs to the class I-like SAM-binding methyltransferase superfamily. MenG/UbiE family.

It catalyses the reaction a 2-demethylmenaquinol + S-adenosyl-L-methionine = a menaquinol + S-adenosyl-L-homocysteine + H(+). The catalysed reaction is a 2-methoxy-6-(all-trans-polyprenyl)benzene-1,4-diol + S-adenosyl-L-methionine = a 5-methoxy-2-methyl-3-(all-trans-polyprenyl)benzene-1,4-diol + S-adenosyl-L-homocysteine + H(+). It functions in the pathway quinol/quinone metabolism; menaquinone biosynthesis; menaquinol from 1,4-dihydroxy-2-naphthoate: step 2/2. Its pathway is cofactor biosynthesis; ubiquinone biosynthesis. In terms of biological role, methyltransferase required for the conversion of demethylmenaquinol (DMKH2) to menaquinol (MKH2) and the conversion of 2-polyprenyl-6-methoxy-1,4-benzoquinol (DDMQH2) to 2-polyprenyl-3-methyl-6-methoxy-1,4-benzoquinol (DMQH2). This chain is Ubiquinone/menaquinone biosynthesis C-methyltransferase UbiE, found in Saccharophagus degradans (strain 2-40 / ATCC 43961 / DSM 17024).